We begin with the raw amino-acid sequence, 352 residues long: S-adenosylmethionine:tRNA ribosyltransferase-isomerase (352 aa).

This sequence belongs to the QueA family. As to quaternary structure, monomer.

The protein resides in the cytoplasm. The enzyme catalyses 7-aminomethyl-7-carbaguanosine(34) in tRNA + S-adenosyl-L-methionine = epoxyqueuosine(34) in tRNA + adenine + L-methionine + 2 H(+). It functions in the pathway tRNA modification; tRNA-queuosine biosynthesis. Functionally, transfers and isomerizes the ribose moiety from AdoMet to the 7-aminomethyl group of 7-deazaguanine (preQ1-tRNA) to give epoxyqueuosine (oQ-tRNA). The polypeptide is S-adenosylmethionine:tRNA ribosyltransferase-isomerase (Cupriavidus necator (strain ATCC 17699 / DSM 428 / KCTC 22496 / NCIMB 10442 / H16 / Stanier 337) (Ralstonia eutropha)).